A 574-amino-acid polypeptide reads, in one-letter code: Fusion glycoprotein F0 (574 aa).

The first 25 residues, 1–25 (MELPILKANAITTILAAVTFCFASS), serve as a signal peptide directing secretion. Over 26 to 524 (QNITEEFYQS…HVNAGKSTTN (499 aa)) the chain is Extracellular. N-linked (GlcNAc...) asparagine; by host glycans are attached at residues N27 and N70. 7 disulfide bridges follow: C37–C439, C69–C212, C313–C343, C322–C333, C358–C367, C382–C393, and C416–C422. A coiled-coil region spans residues 76–96 (VKLINQELDKYKNAVTELQLL). Residues N116, N120, and N126 are each glycosylated (N-linked (GlcNAc...) asparagine; by host). The tract at residues 137-157 (FLGFLLGVGSAIASGIAVSKV) is fusion peptide. A coiled-coil region spans residues 158–209 (LHLEGEVNKIKSALLSTNKAVVSLSNGVSVLTSKVLDLKNYIDKQLLPIVNK). The stretch at 481-516 (LVFPSDEFDASISQVNEKINQSLAFIRKSDELLHHV) forms a coiled coil. N500 is a glycosylation site (N-linked (GlcNAc...) asparagine; by host). A helical transmembrane segment spans residues 525–550 (IMITTIIIVIIVILLSLIAVGLLLYC). A lipid anchor (S-palmitoyl cysteine; by host) is attached at C550. Topologically, residues 551-574 (KARSTPVTLSKDQLSGINNIAFSN) are cytoplasmic.

It belongs to the paramyxoviruses fusion glycoprotein family. In terms of assembly, homotrimer. Heterodimer with fusion protein F2; disulfide-linked. Interacts with host NCL; this interaction plays a role in viral entry into the host cell. As a heterodimer with F2, interacts with host heparan sulfate. As a heterodimer with F2, interacts with host IGF1R; this interaction activates PRKCZ/PKCzeta that recruits NCL/nucleolin from the host nucleus to the plasma membrane. Part of a complex composed of F1, F2 and G glycoproteins. As a heterodimer with F2, interacts with host RHOA; this interaction facilitates virus-induced syncytium formation. As to quaternary structure, homotrimer. Heterodimer with fusion protein F1; disulfide-linked. As a heterodimer with F1, interacts with host heparan sulfate. As a heterodimer with F1, interacts with host IGF1R; this interaction activates PRKCZ/PKCzeta that recruits NCL/nucleolin from the host nucleus to the plasma membrane. Part of a complex composed of F1, F2 and G glycoproteins. As a heterodimer with F1, interacts with host RHOA; this interaction facilitates virus-induced syncytium formation. In terms of processing, the F glycoprotein is synthesized as a F0 inactive precursor that is heavily N-glycosylated and processed at two sites by a host furin-like protease probably in the Golgi. The cleavage site between p27 and F1 may occur after endocytosis to yield the mature F1 and F2 proteins. Both cleavages are required for membrane fusion and p27 is released from the processed protein.

The protein resides in the host Golgi apparatus membrane. The protein localises to the virion membrane. It is found in the host cell membrane. In terms of biological role, inactive precursor that is cleaved at two sites by a furin-like protease to give rise to the mature F1 and F2 fusion glycoproteins. Class I viral fusion protein. Under the current model, the protein has at least 3 conformational states: pre-fusion native state, pre-hairpin intermediate state, and post-fusion hairpin state. During viral and plasma cell membrane fusion, the coiled coil regions assume a trimer-of-hairpins structure, positioning the fusion peptide in close proximity to the C-terminal region of the ectodomain. The formation of this structure appears to drive apposition and subsequent fusion of viral and cellular membranes leading to delivery of the nucleocapsid into the cytoplasm. This fusion is pH independent and occurs at the plasma or endosomal membrane. The trimer of F1-F2 (F protein) also facilitates the attachment to host cell by binding to host heparan sulfate. F protein is involved in the entry into the host cell through the interaction with host IGF1R. This interaction activates PRKCZ/PKCzeta that recruits host NCL/nucleolin to the apical cell surface where it can bind fusion glycoprotein F1. Later in infection, F protein expressed at the plasma membrane of infected cells can mediate fusion with adjacent cells to form syncytia, a cytopathic effect that could lead to tissue necrosis. F protein may trigger p53-dependent apoptosis. Functionally, major determinant of the species specificity of RSV infection. The trimer of F1-F2 (F protein) also facilitates the attachment to host cell by binding to host heparan sulfate. F protein is involved in the entry into the host cell through the interaction with host IGF1R. This interaction activates PRKCZ/PKCzeta that recruits host NCL/nucleolin to the apical cell surface where it can bind fusion glycoprotein F1. Later in infection, F protein expressed at the plasma membrane of infected cells can mediate fusion with adjacent cells to form syncytia, a cytopathic effect that could lead to tissue necrosis. F protein seems to trigger p53-dependent apoptosis. The chain is Fusion glycoprotein F0 (F) from Homo sapiens (Human).